The primary structure comprises 95 residues: Aspartyl/glutamyl-tRNA(Asn/Gln) amidotransferase subunit C (95 aa).

Belongs to the GatC family. As to quaternary structure, heterotrimer of A, B and C subunits.

It carries out the reaction L-glutamyl-tRNA(Gln) + L-glutamine + ATP + H2O = L-glutaminyl-tRNA(Gln) + L-glutamate + ADP + phosphate + H(+). The catalysed reaction is L-aspartyl-tRNA(Asn) + L-glutamine + ATP + H2O = L-asparaginyl-tRNA(Asn) + L-glutamate + ADP + phosphate + 2 H(+). Functionally, allows the formation of correctly charged Asn-tRNA(Asn) or Gln-tRNA(Gln) through the transamidation of misacylated Asp-tRNA(Asn) or Glu-tRNA(Gln) in organisms which lack either or both of asparaginyl-tRNA or glutaminyl-tRNA synthetases. The reaction takes place in the presence of glutamine and ATP through an activated phospho-Asp-tRNA(Asn) or phospho-Glu-tRNA(Gln). In Rhizobium etli (strain ATCC 51251 / DSM 11541 / JCM 21823 / NBRC 15573 / CFN 42), this protein is Aspartyl/glutamyl-tRNA(Asn/Gln) amidotransferase subunit C.